Consider the following 353-residue polypeptide: Quinolinate synthase (353 aa).

2 residues coordinate iminosuccinate: His47 and Ser68. Position 113 (Cys113) interacts with [4Fe-4S] cluster. Iminosuccinate-binding positions include 139–141 (YAN) and Ser156. Cys200 provides a ligand contact to [4Fe-4S] cluster. Residues 226–228 (HPE) and Thr243 contribute to the iminosuccinate site. Cys297 lines the [4Fe-4S] cluster pocket.

Belongs to the quinolinate synthase family. Type 1 subfamily. [4Fe-4S] cluster is required as a cofactor.

The protein localises to the cytoplasm. It catalyses the reaction iminosuccinate + dihydroxyacetone phosphate = quinolinate + phosphate + 2 H2O + H(+). It participates in cofactor biosynthesis; NAD(+) biosynthesis; quinolinate from iminoaspartate: step 1/1. Its function is as follows. Catalyzes the condensation of iminoaspartate with dihydroxyacetone phosphate to form quinolinate. The sequence is that of Quinolinate synthase from Vibrio vulnificus (strain YJ016).